The primary structure comprises 293 residues: 3-hydroxybutyrate-oligomer hydrolase (293 aa).

This sequence belongs to the AB hydrolase superfamily.

The protein localises to the cytoplasm. The catalysed reaction is (3R)-hydroxybutanoate pentamer + H2O = (3R)-hydroxybutanoate tetramer + (R)-3-hydroxybutanoate + H(+). It catalyses the reaction (3R)-hydroxybutanoate tetramer + H2O = (3R)-hydroxybutanoate trimer + (R)-3-hydroxybutanoate + H(+). It carries out the reaction (3R)-hydroxybutanoate trimer + H2O = (3R)-hydroxybutanoate dimer + (R)-3-hydroxybutanoate + H(+). The enzyme catalyses (3R)-hydroxybutanoate dimer + H2O = 2 (R)-3-hydroxybutanoate + H(+). The catalysed reaction is [(3R)-hydroxybutanoate](n) + H2O = [(3R)-hydroxybutanoate](n-1) + (R)-3-hydroxybutanoate + H(+). Its function is as follows. Catalyzes the degradation of various 3-hydroxybutyrate (3HB) oligomers at a high specific activity and artificial amorphous poly(3-hydroxybutyrate) (PHB) at a lower specific activity. Hydrolyzes the 3HB pentamer most efficiently than the tetramer, trimer and dimer. Does not hydrolyze native PHB granules and semicrystalline PHB. Participates in the mobilization of PHB along with other hydrolases. The polypeptide is 3-hydroxybutyrate-oligomer hydrolase (Cupriavidus necator (strain ATCC 17699 / DSM 428 / KCTC 22496 / NCIMB 10442 / H16 / Stanier 337) (Ralstonia eutropha)).